We begin with the raw amino-acid sequence, 211 residues long: Ras-related protein Rab-38 (211 aa).

GTP is bound by residues Gly19, Val20, Gly21, Lys22, Thr23, Ser24, Ser35, Ser36, Tyr38, and Thr41. Mg(2+) is bound at residue Thr23. The short motif at 32–46 is the Switch 1 element; the sequence is QNFSSHYRATIGVDF. Mg(2+) is bound by residues Thr41 and Asp65. Gly68, Lys128, Asp130, Ala160, and Lys161 together coordinate GTP. The Switch 2 signature appears at 68-81; it reads GQERFGNMTRVYYR. The S-palmitoyl cysteine moiety is linked to residue Cys205. The S-geranylgeranyl cysteine moiety is linked to residue Cys208.

This sequence belongs to the small GTPase superfamily. Rab family. As to quaternary structure, interacts with ANKRD27. It depends on Mg(2+) as a cofactor. In terms of processing, although at least one in vitro system can process and methylate the prenylated C-terminal, in an in vitro system that normally express Rab-38 and in vivo the prenylated C-terminal is not proteolytically processed and not methylated. Expressed in melanocytes.

It is found in the cell membrane. The protein localises to the melanosome. The protein resides in the cytoplasmic vesicle. Its subcellular location is the phagosome. It localises to the phagosome membrane. It is found in the melanosome membrane. The enzyme catalyses GTP + H2O = GDP + phosphate + H(+). Regulated by guanine nucleotide exchange factors (GEFs) including the BLOC-3 complex composed of HPS1 and HPS4 which promote the exchange of bound GDP for free GTP. Regulated by GTPase activating proteins (GAPs) including SGSM2 which increase the GTP hydrolysis activity. Inhibited by GDP dissociation inhibitors (GDIs). Its function is as follows. The small GTPases Rab are key regulators of intracellular membrane trafficking, from the formation of transport vesicles to their fusion with membranes. Rabs cycle between an inactive GDP-bound form and an active GTP-bound form that is able to recruit to membranes different sets of downstream effectors directly responsible for vesicle formation, movement, tethering and fusion. RAB38 may be involved in melanosomal transport and docking. Involved in the proper sorting of TYRP1. Involved in peripheral melanosomal distribution of TYRP1 in melanocytes; the function, which probably is implicating vesicle-trafficking, includes cooperation with ANKRD27 and VAMP7. Plays a role in the maturation of phagosomes that engulf pathogens, such as S.aureus and M.tuberculosis. Plays an important role in the control of melanin production and melanosome biogenesis. In concert with RAB32, regulates the proper trafficking of melanogenic enzymes TYR, TYRP1 and DCT/TYRP2 to melanosomes in melanocytes. This is Ras-related protein Rab-38 from Homo sapiens (Human).